An 854-amino-acid polypeptide reads, in one-letter code: Protein translocase subunit SecA (854 aa).

Residues Q81, 99–103 (GEGKT), and D487 each bind ATP.

It belongs to the SecA family. As to quaternary structure, monomer and homodimer. Part of the essential Sec protein translocation apparatus which comprises SecA, SecYEG and auxiliary proteins SecDF. Other proteins may also be involved.

It is found in the cell membrane. The protein resides in the cytoplasm. It carries out the reaction ATP + H2O + cellular proteinSide 1 = ADP + phosphate + cellular proteinSide 2.. Its function is as follows. Part of the Sec protein translocase complex. Interacts with the SecYEG preprotein conducting channel. Has a central role in coupling the hydrolysis of ATP to the transfer of proteins into and across the cell membrane, serving as an ATP-driven molecular motor driving the stepwise translocation of polypeptide chains across the membrane. This is Protein translocase subunit SecA from Mycoplasma mobile (strain ATCC 43663 / 163K / NCTC 11711) (Mesomycoplasma mobile).